Consider the following 319-residue polypeptide: Formimidoylglutamase (319 aa).

Mn(2+)-binding residues include His127, Asp150, His152, Asp154, Asp242, and Asp244.

This sequence belongs to the arginase family. Mn(2+) is required as a cofactor.

It carries out the reaction N-formimidoyl-L-glutamate + H2O = formamide + L-glutamate. Its pathway is amino-acid degradation; L-histidine degradation into L-glutamate; L-glutamate from N-formimidoyl-L-glutamate (hydrolase route): step 1/1. Catalyzes the conversion of N-formimidoyl-L-glutamate to L-glutamate and formamide. This Halalkalibacterium halodurans (strain ATCC BAA-125 / DSM 18197 / FERM 7344 / JCM 9153 / C-125) (Bacillus halodurans) protein is Formimidoylglutamase.